We begin with the raw amino-acid sequence, 124 residues long: Seripauperin-17 (124 aa).

A signal peptide spans 1–20 (MVKLTSIAAGVAAIAAGVAA).

It belongs to the SRP1/TIP1 family. Seripauperin subfamily.

The polypeptide is Seripauperin-17 (PAU17) (Saccharomyces cerevisiae (strain ATCC 204508 / S288c) (Baker's yeast)).